The sequence spans 60 residues: Cytochrome c oxidase subunit 9, mitochondrial (60 aa).

Over 1–15 the chain is Mitochondrial matrix; it reads MSALAPITGTLKKRI. A helical transmembrane segment spans residues 16–38; it reads ITDIVIGFSLGGVMASYWWWGFH. At 39–57 the chain is on the mitochondrial intermembrane side; sequence KNVIDRREAFYADLAEKKK. Residues 58–60 constitute a propeptide, removed in mature form; the sequence is AEN.

This sequence belongs to the fungal cytochrome c oxidase subunit 7a family. Component of the cytochrome c oxidase (complex IV, CIV), a multisubunit enzyme composed of a catalytic core of 3 subunits and several supernumerary subunits. The complex exists as a monomer or a dimer and forms supercomplexes (SCs) in the inner mitochondrial membrane with ubiquinol-cytochrome c oxidoreductase (cytochrome b-c1 complex, complex III, CIII).

The protein localises to the mitochondrion inner membrane. The protein operates within energy metabolism; oxidative phosphorylation. In terms of biological role, component of the cytochrome c oxidase, the last enzyme in the mitochondrial electron transport chain which drives oxidative phosphorylation. The respiratory chain contains 3 multisubunit complexes succinate dehydrogenase (complex II, CII), ubiquinol-cytochrome c oxidoreductase (cytochrome b-c1 complex, complex III, CIII) and cytochrome c oxidase (complex IV, CIV), that cooperate to transfer electrons derived from NADH and succinate to molecular oxygen, creating an electrochemical gradient over the inner membrane that drives transmembrane transport and the ATP synthase. Cytochrome c oxidase is the component of the respiratory chain that catalyzes the reduction of oxygen to water. Electrons originating from reduced cytochrome c in the intermembrane space (IMS) are transferred via the dinuclear copper A center (CU(A)) of subunit 2 and heme A of subunit 1 to the active site in subunit 1, a binuclear center (BNC) formed by heme A3 and copper B (CU(B)). The BNC reduces molecular oxygen to 2 water molecules using 4 electrons from cytochrome c in the IMS and 4 protons from the mitochondrial matrix. This Candida glabrata (strain ATCC 2001 / BCRC 20586 / JCM 3761 / NBRC 0622 / NRRL Y-65 / CBS 138) (Yeast) protein is Cytochrome c oxidase subunit 9, mitochondrial (COX9).